A 99-amino-acid polypeptide reads, in one-letter code: Nucleoid-associated protein EbfC (99 aa).

It belongs to the YbaB/EbfC family. As to quaternary structure, homodimer. Can form tetramers and octamers in solution.

The protein localises to the cytoplasm. It is found in the nucleoid. Its function is as follows. Binds to DNA and alters its conformation. May be involved in global regulation of gene expression. Binds specifically and non-specifically to DNA, preferentially to the 4 bp broken palindrome 5'-GTnAC-3'. Affects expression of a wide variety of genes, encoding both structural and metabolic proteins. This chain is Nucleoid-associated protein EbfC, found in Borreliella burgdorferi (strain ATCC 35210 / DSM 4680 / CIP 102532 / B31) (Borrelia burgdorferi).